We begin with the raw amino-acid sequence, 484 residues long: Maintenance of mitochondrial morphology protein 1 (484 aa).

Over 1-22 (MSFQQSETVPVPAQSSLSFTQG) the chain is Lumenal. A helical transmembrane segment spans residues 23 to 43 (FLLGQLSVVLLIGAFIKFFIF). The Cytoplasmic portion of the chain corresponds to 44 to 484 (GEAPPPPSRG…PGSLSGAAAR (441 aa)). 3 disordered regions span residues 50 to 98 (PSRG…SSST), 272 to 319 (STPP…TGSP), and 388 to 484 (RTGV…AAAR). The segment covering 54–64 (LSHRASTHRRS) has biased composition (basic residues). Composition is skewed to polar residues over residues 65 to 78 (NSIYTINHNEANNR) and 85 to 98 (SNSNVLRPVPSSST). One can recognise an SMP-LTD domain in the interval 130–380 (QPESLDWFNV…EPRVQVVGLP (251 aa)). Over residues 272 to 286 (STPPLHTPSPSPSPP) the composition is skewed to pro residues. Over residues 399–408 (TGSNAASRSA) the composition is skewed to polar residues. Residues 413–427 (LGDHHLGDREPEGLR) are compositionally biased toward basic and acidic residues. Polar residues-rich tracts occupy residues 437–449 (QFDSVSRTSSYNV) and 466–476 (GALSEQFQMPG).

It belongs to the MMM1 family. In terms of assembly, homodimer. Component of the ER-mitochondria encounter structure (ERMES) or MDM complex, composed of mmm1, mdm10, mdm12 and mdm34. A mmm1 homodimer associates with one molecule of mdm12 on each side in a pairwise head-to-tail manner, and the SMP-LTD domains of mmm1 and mdm12 generate a continuous hydrophobic tunnel for phospholipid trafficking.

It localises to the endoplasmic reticulum membrane. In terms of biological role, component of the ERMES/MDM complex, which serves as a molecular tether to connect the endoplasmic reticulum (ER) and mitochondria. Components of this complex are involved in the control of mitochondrial shape and protein biogenesis, and function in nonvesicular lipid trafficking between the ER and mitochondria. The mdm12-mmm1 subcomplex functions in the major beta-barrel assembly pathway that is responsible for biogenesis of all outer membrane beta-barrel proteins, and acts in a late step after the SAM complex. The mdm10-mdm12-mmm1 subcomplex further acts in the TOM40-specific pathway after the action of the mdm12-mmm1 complex. Essential for establishing and maintaining the structure of mitochondria and maintenance of mtDNA nucleoids. The sequence is that of Maintenance of mitochondrial morphology protein 1 from Aspergillus niger (strain ATCC MYA-4892 / CBS 513.88 / FGSC A1513).